The chain runs to 228 residues: Ankyrin repeat domain-containing protein 46 (228 aa).

4 ANK repeats span residues 11-40 (QTNV…DPNI), 44-73 (RGRT…DLLA), 77-103 (QGNT…KIDI), and 107-138 (QGAT…EVKG). A helical transmembrane segment spans residues 195 to 215 (VLLLIFVIALLSLGIAYYVSG).

The protein resides in the membrane. The protein is Ankyrin repeat domain-containing protein 46 (ANKRD46) of Bos taurus (Bovine).